Here is a 481-residue protein sequence, read N- to C-terminus: MSLYMVRYSEIGLKGDRERSRMESILMDNIRKYYEIIGLRASCRIMSGHVLVEADGDGPLRHIMGIKSYSPVLRFRAETLEDITRIASEIYREKVRGKTFGVRCNRTGTHSFTSLDVERAIGDSLYDASAGVNLKNPDIWIHADIVGKDVFFYHEIIPGPGGLPLGSEGKYISLVSGGIDSPVSTWMIMKRGSPCDILFCSLSYPVDLRPFVDVVKKLVERWAPYRKPRIYVADCRSLIRTMVIEGRTKYSNVTFKRVIYRIAEKIALENGYNGIVTGESLGQVSSQTAENLKAIESGIGVPILRPLIGMDKDEVVDMARRIGTFPELSMGEFCSLFASRPIIRSKPEDIDEDMKQIDMEELFEGIRAYDIDDLSVALRTDLSLKGSIPKDAVIIDLRSRSQYEKDHIPNSINLPLGDAINVEDKGRTYVVYCGMGLQSAYVASMLRNRGITAYYSTFSDLKKRLSEKESGNITGIDQPAE.

A THUMP domain is found at 54–156 (ADGDGPLRHI…GKDVFFYHEI (103 aa)). ATP-binding positions include 174–175 (LV), lysine 256, glycine 278, and glutamine 287. Cysteines 334 and 433 form a disulfide. Residues 388–463 (IPKDAVIIDL…YYSTFSDLKK (76 aa)) form the Rhodanese domain. Cysteine 433 acts as the Cysteine persulfide intermediate in catalysis.

The protein belongs to the ThiI family.

It is found in the cytoplasm. The catalysed reaction is [ThiI sulfur-carrier protein]-S-sulfanyl-L-cysteine + a uridine in tRNA + 2 reduced [2Fe-2S]-[ferredoxin] + ATP + H(+) = [ThiI sulfur-carrier protein]-L-cysteine + a 4-thiouridine in tRNA + 2 oxidized [2Fe-2S]-[ferredoxin] + AMP + diphosphate. The enzyme catalyses [ThiS sulfur-carrier protein]-C-terminal Gly-Gly-AMP + S-sulfanyl-L-cysteinyl-[cysteine desulfurase] + AH2 = [ThiS sulfur-carrier protein]-C-terminal-Gly-aminoethanethioate + L-cysteinyl-[cysteine desulfurase] + A + AMP + 2 H(+). Its pathway is cofactor biosynthesis; thiamine diphosphate biosynthesis. Its function is as follows. Catalyzes the ATP-dependent transfer of a sulfur to tRNA to produce 4-thiouridine in position 8 of tRNAs, which functions as a near-UV photosensor. Also catalyzes the transfer of sulfur to the sulfur carrier protein ThiS, forming ThiS-thiocarboxylate. This is a step in the synthesis of thiazole, in the thiamine biosynthesis pathway. The sulfur is donated as persulfide by IscS. The protein is tRNA sulfurtransferase of Thermoplasma acidophilum (strain ATCC 25905 / DSM 1728 / JCM 9062 / NBRC 15155 / AMRC-C165).